Consider the following 316-residue polypeptide: Probable prolyl 4-hydroxylase 7 (316 aa).

At 1–4 the chain is on the cytoplasmic side; that stretch reads MDSR. A helical; Signal-anchor for type II membrane protein transmembrane segment spans residues 5 to 24; that stretch reads IFLAFSLCFLFTLPLISSAP. Residues 25 to 316 are Lumenal-facing; it reads NRFLTRSSNT…CRKSCKACSS (292 aa). The N-linked (GlcNAc...) asparagine glycan is linked to asparagine 96. Positions 139-261 constitute a Fe2OG dioxygenase domain; that stretch reads NGESMQILHY…KWSATRWIHV (123 aa). Fe cation contacts are provided by histidine 157 and aspartate 159. Asparagine 233 carries an N-linked (GlcNAc...) asparagine glycan. Residue histidine 242 coordinates Fe cation. Residue lysine 252 coordinates 2-oxoglutarate. Residues 274-314 enclose the ShKT domain; the sequence is CMDENVSCEKWAKAGECQKNPTYMVGSDKDHGYCRKSCKAC. Cystine bridges form between cysteine 274-cysteine 314, cysteine 281-cysteine 307, and cysteine 290-cysteine 311. A glycan (N-linked (GlcNAc...) asparagine) is linked at asparagine 278.

It belongs to the P4HA family. It depends on Fe(2+) as a cofactor. The cofactor is L-ascorbate.

The protein localises to the endoplasmic reticulum membrane. It carries out the reaction L-prolyl-[collagen] + 2-oxoglutarate + O2 = trans-4-hydroxy-L-prolyl-[collagen] + succinate + CO2. In terms of biological role, catalyzes the post-translational formation of 4-hydroxyproline in -Xaa-Pro-Gly- sequences in proline-rich peptide sequences of plant glycoproteins and other proteins. Hydroxyprolines are important constituent of many plant cell wall glycoproteins such as extensins, hydroxyproline-rich glycoproteins, lectins and arabinogalactan proteins. This Arabidopsis thaliana (Mouse-ear cress) protein is Probable prolyl 4-hydroxylase 7.